Consider the following 76-residue polypeptide: Omega-conotoxin-like TxMKLT1-0211 (76 aa).

A signal peptide spans 1–22 (MKLTCMMIVAVLFLTAWTFVTA). Positions 23–52 (VPHSSNALENLYLKAHHEMNNPEDSELNKR) are excised as a propeptide. 3 cysteine pairs are disulfide-bonded: Cys-53/Cys-67, Cys-60/Cys-71, and Cys-66/Cys-75.

This sequence belongs to the conotoxin O1 superfamily. As to expression, expressed by the venom duct.

The protein resides in the secreted. Omega-conotoxins act at presynaptic membranes, they bind and block voltage-gated calcium channels (Cav). The protein is Omega-conotoxin-like TxMKLT1-0211 of Conus textile (Cloth-of-gold cone).